We begin with the raw amino-acid sequence, 265 residues long: Glutamate racemase (265 aa).

Residues 9–10 (DS) and 41–42 (YS) contribute to the substrate site. Catalysis depends on Cys73, which acts as the Proton donor/acceptor. A substrate-binding site is contributed by 74–75 (NT). The active-site Proton donor/acceptor is the Cys184. Residue 185–186 (TH) coordinates substrate.

Belongs to the aspartate/glutamate racemases family.

The enzyme catalyses L-glutamate = D-glutamate. It functions in the pathway cell wall biogenesis; peptidoglycan biosynthesis. Its function is as follows. Provides the (R)-glutamate required for cell wall biosynthesis. This is Glutamate racemase from Haemophilus ducreyi (strain 35000HP / ATCC 700724).